The sequence spans 113 residues: Protein translation factor SUI1 homolog 2 (113 aa).

An N-acetylserine modification is found at Ser2.

Belongs to the SUI1 family.

In terms of biological role, probably involved in translation. The polypeptide is Protein translation factor SUI1 homolog 2 (Arabidopsis thaliana (Mouse-ear cress)).